Reading from the N-terminus, the 57-residue chain is Aspartyl-phosphate phosphatase YnzD (57 aa).

Belongs to the spo0E family.

Functionally, aspartyl-phosphate phosphatase which specifically dephosphorylates the sporulation transcription factor Spo0A-P and negatively regulates the sporulation initiation pathway in order to control the proper timing of sporulation. The polypeptide is Aspartyl-phosphate phosphatase YnzD (ynzD) (Bacillus subtilis (strain 168)).